The chain runs to 325 residues: uncharacterized protein (325 aa).

Residues 1-32 are disordered; it reads MKQEYIPLDEFPNKSNEGMLNDEGTSSSGLST. Positions 23-32 are enriched in low complexity; sequence EGTSSSGLST. Positions 135–223 form a coiled coil; the sequence is AEEISNLKTS…LKKREDLLRL (89 aa).

Its subcellular location is the cytoplasm. It localises to the cytoskeleton. The protein localises to the microtubule organizing center. The protein resides in the spindle pole body. This is an uncharacterized protein from Schizosaccharomyces pombe (strain 972 / ATCC 24843) (Fission yeast).